Here is a 547-residue protein sequence, read N- to C-terminus: Chaperonin GroEL (547 aa).

ATP is bound by residues 30-33 (TLGP), K51, 87-91 (DGTTT), G415, and D496. Residues 528-547 (KEGAAPAGGMPDMGGMGGMM) are disordered. A compositionally biased stretch (gly residues) spans 538–547 (PDMGGMGGMM).

Belongs to the chaperonin (HSP60) family. In terms of assembly, forms a cylinder of 14 subunits composed of two heptameric rings stacked back-to-back. Interacts with the co-chaperonin GroES.

It localises to the cytoplasm. The catalysed reaction is ATP + H2O + a folded polypeptide = ADP + phosphate + an unfolded polypeptide.. Together with its co-chaperonin GroES, plays an essential role in assisting protein folding. The GroEL-GroES system forms a nano-cage that allows encapsulation of the non-native substrate proteins and provides a physical environment optimized to promote and accelerate protein folding. The protein is Chaperonin GroEL of Ruegeria sp. (strain TM1040) (Silicibacter sp.).